The primary structure comprises 197 residues: Inosine triphosphate pyrophosphatase (197 aa).

10–15 is an ITP binding site; the sequence is TGNANK. Mg(2+) is bound at residue Glu45. Residues Lys58, 76-77, Lys93, 151-154, Lys175, and 180-181 contribute to the ITP site; these read DT, FGWD, and HR.

The protein belongs to the HAM1 NTPase family. Homodimer. Mg(2+) is required as a cofactor. Mn(2+) serves as cofactor.

It is found in the cytoplasm. Its subcellular location is the nucleus. It carries out the reaction ITP + H2O = IMP + diphosphate + H(+). It catalyses the reaction dITP + H2O = dIMP + diphosphate + H(+). The enzyme catalyses XTP + H2O = XMP + diphosphate + H(+). The catalysed reaction is N(6)-hydroxy-dATP + H2O = N(6)-hydroxy-dAMP + diphosphate + H(+). In terms of biological role, pyrophosphatase that hydrolyzes the non-canonical purine nucleotides inosine triphosphate (ITP), deoxyinosine triphosphate (dITP) as well as 2'-deoxy-N-6-hydroxylaminopurine triphosphate (dHAPTP) and 5-bromodeoxyuridine 5'-triphosphate (BrdUTP) to their respective monophosphate derivatives. Xanthosine 5'-triphosphate (XTP) is also a potential substrate. The enzyme does not distinguish between the deoxy- and ribose forms. Probably excludes non-canonical purines from RNA and DNA precursor pools, thus preventing their incorporation into RNA and DNA and avoiding chromosomal lesions. The polypeptide is Inosine triphosphate pyrophosphatase (Saccharomyces cerevisiae (strain ATCC 204508 / S288c) (Baker's yeast)).